A 236-amino-acid polypeptide reads, in one-letter code: Large ribosomal subunit protein uL2 (236 aa).

The disordered stretch occupies residues 198 to 236 (DHPFGGGGRQHPGRPKTVSRGTPPGRKVGSIAARRTGKR).

The protein belongs to the universal ribosomal protein uL2 family. Part of the 50S ribosomal subunit. Forms a bridge to the 30S subunit in the 70S ribosome.

Its function is as follows. One of the primary rRNA binding proteins. Required for association of the 30S and 50S subunits to form the 70S ribosome, for tRNA binding and peptide bond formation. It has been suggested to have peptidyltransferase activity; this is somewhat controversial. Makes several contacts with the 16S rRNA in the 70S ribosome. This Methanothrix thermoacetophila (strain DSM 6194 / JCM 14653 / NBRC 101360 / PT) (Methanosaeta thermophila) protein is Large ribosomal subunit protein uL2.